The sequence spans 518 residues: Pre-glycoprotein polyprotein GP complex (518 aa).

Residue G2 is the site of N-myristoyl glycine; by host attachment. Over 2-17 the chain is Extracellular; sequence GQVIGFFQSLPNIINE. A helical transmembrane segment spans residues 18-33; sequence ALNIALICVALIAILK. The Cytoplasmic portion of the chain corresponds to 34–58; it reads GIVNIWKSGLIQLFIFLILAGRSCS. C57 contacts Zn(2+). Over 59–456 the chain is Extracellular; it reads HTFQIGRNHE…QGSTPLSLVD (398 aa). 4 cysteine pairs are disulfide-bonded: C87/C258, C303/C316, C325/C334, and C388/C409. Residues N90, N112, N127, N180, and N251 are each glycosylated (N-linked (GlcNAc...) asparagine; by host). 4 N-linked (GlcNAc...) asparagine; by host glycosylation sites follow: N389, N397, N414, and N419. Residues 457-477 traverse the membrane as a helical segment; the sequence is LCFWSTLFYVTTLFAHLVGFP. The Cytoplasmic segment spans residues 478–518; the sequence is THRHILDGPCPKPHRLTKKGICSCGHFGIPGKPVRWVKRSR. H479, H481, C487, H491, C499, and C501 together coordinate Zn(2+).

Belongs to the arenaviridae GPC protein family. In terms of assembly, interacts with glycoprotein G2. Part of the GP complex (GP-C) together with glycoprotein G1 and glycoprotein G2. The GP-complex interacts with protein Z, which interacts with ribonucleocapsid; these interactions may induce virion budding. As to quaternary structure, homotrimer; disulfide-linked. In pre-fusion state, G1 homotrimers bind G2 homotrimers via ionic interactions. Part of the GP complex (GP-C) together with glycoprotein G2 and the stable signal peptide. The GP-complex interacts with protein Z, which interacts with ribonucleocapsid; these interactions may induce virion budding. Homotrimer. Interacts with the stable signal peptide. In pre-fusion state, G2 homotrimers bind G1 homotrimers via ionic interactions. Part of the GP complex (GP-C) together with glycoprotein G1 and the stable signal peptide. Acidification in the endosome triggers rearrangements, which ultimately leads to a 6 helix bundle formed by the two heptad repeat domains (HR1 and HR2) in post-fusion state. The GP-complex interacts with protein Z, which interacts with ribonucleocapsid; these interactions may induce virion budding. Post-translationally, specific enzymatic cleavages in vivo yield mature proteins. GP-C polyprotein is cleaved in the endoplasmic reticulum by the host protease MBTPS1. Only cleaved glycoprotein is incorporated into virions. The SSP remains stably associated with the GP complex following cleavage by signal peptidase and plays crucial roles in the trafficking of GP through the secretory pathway. In terms of processing, myristoylation is necessary for GP2-mediated fusion activity.

It is found in the virion membrane. The protein resides in the host endoplasmic reticulum membrane. The protein localises to the host Golgi apparatus membrane. It localises to the host cell membrane. In terms of biological role, functions as a cleaved signal peptide that is retained as the third component of the GP complex (GP-C). Helps to stabilize the spike complex in its native conformation. The SSP is required for efficient glycoprotein expression, post-translational maturation cleavage of G1 and G2, glycoprotein transport to the cell surface plasma membrane, formation of infectious virus particles, and acid pH-dependent glycoprotein-mediated cell fusion. Functionally, forms the virion spikes together with glycoprotein G2. The glycoprotein spike trimers are connected to the underlying matrix. Mediates virus attachment to host receptor alpha-dystroglycan DAG1. This attachment induces virion internalization predominantly through clathrin- and caveolin-independent endocytosis. Forms the virion spikes together with glycoprotein G1. The glycoprotein spike trimers are connected to the underlying matrix. Class I viral fusion protein that directs fusion of viral and host endosomal membranes, leading to delivery of the nucleocapsid into the cytoplasm. Membrane fusion is mediated by irreversible conformational changes induced by acidification. This chain is Pre-glycoprotein polyprotein GP complex, found in Bolomys (OLVV).